We begin with the raw amino-acid sequence, 438 residues long: UDP-N-acetylglucosamine 1-carboxyvinyltransferase 1 (438 aa).

22-23 (KN) lines the phosphoenolpyruvate pocket. UDP-N-acetyl-alpha-D-glucosamine is bound at residue Arg95. Cys119 functions as the Proton donor in the catalytic mechanism. Residue Cys119 is modified to 2-(S-cysteinyl)pyruvic acid O-phosphothioketal. UDP-N-acetyl-alpha-D-glucosamine-binding positions include 124-128 (RPIDL), Asp307, and Val329.

It belongs to the EPSP synthase family. MurA subfamily.

The protein localises to the cytoplasm. It carries out the reaction phosphoenolpyruvate + UDP-N-acetyl-alpha-D-glucosamine = UDP-N-acetyl-3-O-(1-carboxyvinyl)-alpha-D-glucosamine + phosphate. Its pathway is cell wall biogenesis; peptidoglycan biosynthesis. Cell wall formation. Adds enolpyruvyl to UDP-N-acetylglucosamine. The sequence is that of UDP-N-acetylglucosamine 1-carboxyvinyltransferase 1 from Lactiplantibacillus plantarum (strain ATCC BAA-793 / NCIMB 8826 / WCFS1) (Lactobacillus plantarum).